A 370-amino-acid polypeptide reads, in one-letter code: Cathepsin B-like cysteine proteinase 3 (370 aa).

Positions 1 to 16 (MLKVYFLALFLAGCSA) are cleaved as a signal peptide. The propeptide occupies 17–91 (FVLDEIRGIN…FVRGEIVPEP (75 aa)). 6 cysteine pairs are disulfide-bonded: C105/C134, C117/C162, C153/C210, C154/C158, C190/C214, and C198/C202. C120 is an active-site residue. N-linked (GlcNAc...) asparagine glycosylation occurs at N138. Catalysis depends on residues H284 and N304.

The protein belongs to the peptidase C1 family.

In Caenorhabditis elegans, this protein is Cathepsin B-like cysteine proteinase 3 (cpr-3).